We begin with the raw amino-acid sequence, 230 residues long: Cytidylate kinase (230 aa).

16 to 24 is a binding site for ATP; it reads GPASAGKST.

Belongs to the cytidylate kinase family. Type 1 subfamily.

Its subcellular location is the cytoplasm. The enzyme catalyses CMP + ATP = CDP + ADP. It carries out the reaction dCMP + ATP = dCDP + ADP. The protein is Cytidylate kinase of Lactobacillus johnsonii (strain CNCM I-12250 / La1 / NCC 533).